Consider the following 203-residue polypeptide: Putative 3-methyladenine DNA glycosylase (203 aa).

The protein belongs to the DNA glycosylase MPG family.

This chain is Putative 3-methyladenine DNA glycosylase, found in Clostridium botulinum (strain ATCC 19397 / Type A).